A 314-amino-acid chain; its full sequence is Dioxygenase easH (314 aa).

Fe cation contacts are provided by His141, Asp143, and His217.

The protein belongs to the PhyH family. In terms of assembly, homodimer. The cofactor is Fe cation.

Its pathway is alkaloid biosynthesis; ergot alkaloid biosynthesis. Dioxygenase; part of the gene cluster that mediates the biosynthesis of fungal ergot alkaloid. DmaW catalyzes the first step of ergot alkaloid biosynthesis by condensing dimethylallyl diphosphate (DMAP) and tryptophan to form 4-dimethylallyl-L-tryptophan. The second step is catalyzed by the methyltransferase easF that methylates 4-dimethylallyl-L-tryptophan in the presence of S-adenosyl-L-methionine, resulting in the formation of 4-dimethylallyl-L-abrine. The catalase easC and the FAD-dependent oxidoreductase easE then transform 4-dimethylallyl-L-abrine to chanoclavine-I which is further oxidized by easD in the presence of NAD(+), resulting in the formation of chanoclavine-I aldehyde. Agroclavine dehydrogenase easG then mediates the conversion of chanoclavine-I aldehyde to agroclavine via a non-enzymatic adduct reaction: the substrate is an iminium intermediate that is formed spontaneously from chanoclavine-I aldehyde in the presence of glutathione. The presence of easA is not required to complete this reaction. Further conversion of agroclavine to paspalic acid is a two-step process involving oxidation of agroclavine to elymoclavine and of elymoclavine to paspalic acid, the second step being performed by the elymoclavine oxidase cloA. Paspalic acid is then further converted to D-lysergic acid. Ergopeptines are assembled from D-lysergic acid and three different amino acids by the D-lysergyl-peptide-synthetases composed each of a monomudular and a trimodular nonribosomal peptide synthetase subunit. LpsB and lpsC encode the monomodular subunits responsible for D-lysergic acid activation and incorporation into the ergopeptine backbone. LpsA1 and A2 subunits encode the trimodular nonribosomal peptide synthetase assembling the tripeptide portion of ergopeptines. LpsA1 is responsible for formation of the major ergopeptine, ergotamine, and lpsA2 for alpha-ergocryptine, the minor ergopeptine of the total alkaloid mixture elaborated by C.purpurea. D-lysergyl-tripeptides are assembled by the nonribosomal peptide synthetases and released as N-(D-lysergyl-aminoacyl)-lactams. Cyclolization of the D-lysergyl-tripeptides is performed by the Fe(2+)/2-ketoglutarate-dependent dioxygenase easH which introduces a hydroxyl group into N-(D-lysergyl-aminoacyl)-lactam at alpha-C of the aminoacyl residue followed by spontaneous condensation with the terminal lactam carbonyl group. The sequence is that of Dioxygenase easH from Claviceps purpurea (strain 20.1) (Ergot fungus).